A 272-amino-acid chain; its full sequence is 1,4-dihydroxy-6-naphtoate synthase (272 aa).

Substrate-binding positions include Lys55 to Ser57 and Thr107 to Ala108. Residue His145 is the Proton acceptor of the active site.

This sequence belongs to the MqnA/MqnD family. MqnD subfamily.

It catalyses the reaction cyclic dehypoxanthinylfutalosinate = 1,4-dihydroxy-6-naphthoate + dihydroxyacetone. It participates in quinol/quinone metabolism; menaquinone biosynthesis. In terms of biological role, catalyzes the conversion of cyclic dehypoxanthine futalosine (cyclic DHFL) into 1,4-dihydroxy-6-naphthoate, a step in the biosynthesis of menaquinone (MK, vitamin K2). The protein is 1,4-dihydroxy-6-naphtoate synthase of Thermus thermophilus (strain ATCC 27634 / DSM 579 / HB8).